Here is a 216-residue protein sequence, read N- to C-terminus: Protein YabP (216 aa).

The sequence is that of Protein YabP (yabP) from Escherichia coli (strain K12).